Here is a 342-residue protein sequence, read N- to C-terminus: Platelet-activating factor receptor (342 aa).

Topologically, residues 1-16 (MEPNNSFRVDSEFRYT) are extracellular. N4 is a glycosylation site (N-linked (GlcNAc...) asparagine). The helical transmembrane segment at 17-38 (LFPIFYSIVFVLGVIANSYVLW) threads the bilayer. Over 39–54 (VFARLYPSKKFNEIKI) the chain is Cytoplasmic. The helical transmembrane segment at 55-74 (FMVNLTMADLLFLVTLPLWI) threads the bilayer. Over 75-91 (VYYYNQGDWILPKFLCN) the chain is Extracellular. A disulfide bridge links C90 with C173. A helical membrane pass occupies residues 92–113 (LAGCFFFINTYCSVAFLAVITY). Residues 114–133 (NRFQAVTRPIKTAQATTRKR) lie on the Cytoplasmic side of the membrane. A helical transmembrane segment spans residues 134–155 (GILLSLIIWVSIVGAASYFFVL). At 156-184 (DSTNREPNKTGSANITRCFEHYEKGSIPV) the chain is on the extracellular side. N163 and N169 each carry an N-linked (GlcNAc...) asparagine glycan. A helical transmembrane segment spans residues 185-205 (LTIHIFLVFSFFLVFLIILFC). The Cytoplasmic portion of the chain corresponds to 206-233 (NLVIIRTLLTQQVQIQRNAEVKRRALWM). Residues 234-254 (VCTVLAVFIICFVPHHLVQLP) form a helical membrane-spanning segment. Over 255–276 (WTLAELGFQDTDFHQAINDAHQ) the chain is Extracellular. Residues 277–296 (VTLCLLSTNCVLDPIIYCFL) form a helical membrane-spanning segment. Topologically, residues 297–342 (TKKFRKHLTEKLYSMRESRKCSRATSETGTEVVMQLKDVPVKSLKY) are cytoplasmic.

Belongs to the G-protein coupled receptor 1 family. Interacts with ARRB1. As to expression, found in oviductal epithelial and stroma cells. Levels in the oviduct are raised at days 2-4 of both pregnancy and of the estrus cycle. In the endometrium, localization is predominantly to the apical borders of glandular and luminal epithelial cells. Expressed at lower levels in endometrial stromal cells. Levels in the endometrium are increased at day 20 of pregnancy (at protein level).

The protein localises to the cell membrane. In terms of biological role, receptor for platelet activating factor, a chemotactic phospholipid mediator that possesses potent inflammatory, smooth-muscle contractile and hypotensive activity. Seems to mediate its action via a G protein that activates a phosphatidylinositol-calcium second messenger system. May be involved in the morphological and physical modifications of the oviduct and uterus during the estrus cycle and early pregnancy. The chain is Platelet-activating factor receptor from Bos taurus (Bovine).